The following is a 100-amino-acid chain: Small ribosomal subunit protein uS14c (100 aa).

The tract at residues 1-31 is disordered; sequence MARKSLIQREKKRQKLEQKYHSIRRSSKKEI.

It belongs to the universal ribosomal protein uS14 family. Part of the 30S ribosomal subunit.

It is found in the plastid. It localises to the chloroplast. Binds 16S rRNA, required for the assembly of 30S particles. This is Small ribosomal subunit protein uS14c from Solanum bulbocastanum (Wild potato).